Consider the following 473-residue polypeptide: Dol-P-Glc:Glc(2)Man(9)GlcNAc(2)-PP-Dol alpha-1,2-glucosyltransferase (473 aa).

Topologically, residues 1–6 (MAQLEG) are cytoplasmic. The helical transmembrane segment at 7 to 27 (YCFSAALSCTFLVSCLLFSAF) threads the bilayer. Topologically, residues 28–64 (SRALREPYMDEIFHLPQAQRYCEGHFSLSQWDPMITT) are extracellular. A helical membrane pass occupies residues 65–85 (LPGLYLVSVGVVKPAIWIFAW). The Cytoplasmic segment spans residues 86-97 (SEHVVCSIGMLR). The chain crosses the membrane as a helical span at residues 98-118 (FVNLLFSVGNFYLLYLLFHKV). The Extracellular portion of the chain corresponds to 119-126 (QPRNKAAS). A helical membrane pass occupies residues 127-147 (SIQRVLSTLTLAVFPTLYFFN). The Cytoplasmic portion of the chain corresponds to 148–150 (FLY). A helical membrane pass occupies residues 151 to 171 (YTEAGSMFFTLFAYLMCLYGN). Residues 172-175 (HKTS) lie on the Extracellular side of the membrane. A helical transmembrane segment spans residues 176-196 (AFLGFCGFMFRQTNIIWAVFC). The Cytoplasmic portion of the chain corresponds to 197 to 256 (AGNVIAQKLTEAWKTELQKKEDRLPPIKGPFAEFRKILQFLLAYSMSFKNLSMLFCLTWP). Residues 257-277 (YILLGFLFCAFVVVNGGIVIG) traverse the membrane as a helical segment. Over 278 to 283 (DRSSHE) the chain is Extracellular. A helical membrane pass occupies residues 284 to 304 (ACLHFPQLFYFFSFTLFFSFP). The Cytoplasmic segment spans residues 305–317 (HLLSPSKIKTFLS). The chain crosses the membrane as a helical span at residues 318 to 338 (LVWKHGILFLVVTLVSVFLVW). The Extracellular portion of the chain corresponds to 339–365 (KFTYAHKYLLADNRHYTFYVWKRVFQR). The chain crosses the membrane as a helical span at residues 366–386 (YAILKYLLVPAYIFAGWSIAD). Over 387-392 (SLKSKP) the chain is Cytoplasmic. A helical transmembrane segment spans residues 393 to 413 (IFWNLMFFICLFIVIVPQKLL). Residues 414–436 (EFRYFILPYVIYRLNITLPPTSR) lie on the Extracellular side of the membrane. The chain crosses the membrane as a helical span at residues 437–457 (LVCELSCYAIVNFITFYIFLN). Residues 458–473 (KTFQWPNSQDIQRFMW) lie on the Cytoplasmic side of the membrane.

This sequence belongs to the ALG10 glucosyltransferase family. As to quaternary structure, interacts with KCNH1; may regulate KCNH1, possibly by regulating its N-glycosylation. Interacts with KCNH2; may reduce KCNH2 sensitivity to classic proarrhythmic drug blockade, possibly by regulating its N-glycosylation. As to expression, highly expressed in heart, placenta, liver, kidney and pancreas. Weakly expressed in lung, skeletal muscle and brain.

It is found in the endoplasmic reticulum membrane. It carries out the reaction an alpha-D-Glc-(1-&gt;3)-alpha-D-Glc-(1-&gt;3)-alpha-D-Man-(1-&gt;2)-alpha-D-Man-(1-&gt;2)-alpha-D-Man-(1-&gt;3)-[alpha-D-Man-(1-&gt;2)-alpha-D-Man-(1-&gt;3)-[alpha-D-Man-(1-&gt;2)-alpha-D-Man-(1-&gt;6)]-alpha-D-Man-(1-&gt;6)]-beta-D-Man-(1-&gt;4)-beta-D-GlcNAc-(1-&gt;4)-alpha-D-GlcNAc-diphospho-di-trans,poly-cis-dolichol + a di-trans,poly-cis-dolichyl beta-D-glucosyl phosphate = a alpha-D-Glc-(1-&gt;2)-alpha-D-Glc-(1-&gt;3)-alpha-D-Glc-(1-&gt;3)-alpha-D-Man-(1-&gt;2)-alpha-D-Man-(1-&gt;2)-alpha-D-Man-(1-&gt;3)-[alpha-D-Man-(1-&gt;2)-alpha-D-Man-(1-&gt;3)-[alpha-D-Man-(1-&gt;2)-alpha-D-Man-(1-&gt;6)]-alpha-D-Man-(1-&gt;6)]-beta-D-Man-(1-&gt;4)-beta-D-GlcNAc-(1-&gt;4)-alpha-D-GlcNAc-diphospho-di-trans,poly-cis-dolichol + a di-trans,poly-cis-dolichyl phosphate + H(+). It functions in the pathway protein modification; protein glycosylation. Functionally, dol-P-Glc:Glc(2)Man(9)GlcNAc(2)-PP-Dol alpha-1,2-glucosyltransferase that operates in the biosynthetic pathway of dolichol-linked oligosaccharides, the glycan precursors employed in protein asparagine (N)-glycosylation. The assembly of dolichol-linked oligosaccharides begins on the cytosolic side of the endoplasmic reticulum membrane and finishes in its lumen. The sequential addition of sugars to dolichol pyrophosphate produces dolichol-linked oligosaccharides containing fourteen sugars, including two GlcNAcs, nine mannoses and three glucoses. Once assembled, the oligosaccharide is transferred from the lipid to nascent proteins by oligosaccharyltransferases. In the lumen of the endoplasmic reticulum, adds the third and last glucose residue from dolichyl phosphate glucose (Dol-P-Glc) onto the lipid-linked oligosaccharide intermediate Glc(2)Man(9)GlcNAc(2)-PP-Dol to produce Glc(3)Man(9)GlcNAc(2)-PP-Dol. The polypeptide is Dol-P-Glc:Glc(2)Man(9)GlcNAc(2)-PP-Dol alpha-1,2-glucosyltransferase (Homo sapiens (Human)).